The primary structure comprises 413 residues: Variant surface glycoprotein YnAT 1.3 (413 aa).

The first 22 residues, 1 to 22 (MLDNSRARSIVHLLILLKAHVI), serve as a signal peptide directing secretion. Asparagine 91, asparagine 361, and asparagine 379 each carry an N-linked (GlcNAc...) asparagine glycan. Asparagine 379 carries the GPI-anchor amidated asparagine lipid modification. The propeptide at 380–413 (SSNPTSRQNSVVQEPTTVSAAAITPLILPWTLLI) is removed in mature form.

Its subcellular location is the cell membrane. Its function is as follows. VSG forms a coat on the surface of the parasite. The trypanosome evades the immune response of the host by expressing a series of antigenically distinct VSGs from an estimated 1000 VSG genes. This chain is Variant surface glycoprotein YnAT 1.3, found in Trypanosoma congolense.